Reading from the N-terminus, the 66-residue chain is Large ribosomal subunit protein bL35c (66 aa).

The protein belongs to the bacterial ribosomal protein bL35 family.

It localises to the plastid. The protein localises to the chloroplast. The protein is Large ribosomal subunit protein bL35c of Guillardia theta (Cryptophyte).